Consider the following 2835-residue polypeptide: Vanchrobactin synthetase VabF (2835 aa).

Residues 16–452 (EDQWPLIGTQ…IPPSEKQQIT (437 aa)) form a condensation 1 region. Positions 473–880 (QQTVESKPNE…GRCDHQIKIR (408 aa)) are adenylation 1. The region spanning 988–1062 (APITQPEQLL…MMAGQMVPLQ (75 aa)) is the Carrier 1 domain. Ser-1023 carries the post-translational modification O-(pantetheine 4'-phosphoryl)serine. Condensation stretches follow at residues 1081-1499 (WFEE…KIQQ) and 1539-1961 (DVLP…EWDL). The adenylation 2 stretch occupies residues 1992–2394 (QQQRSPHQLA…GRSDDQIKIR (403 aa)). Residues 2503 to 2578 (NAHPGLETQL…KLASLLLDDD (76 aa)) enclose the Carrier 2 domain. O-(pantetheine 4'-phosphoryl)serine is present on Ser-2538. The interval 2601–2821 (ALFCVNSASG…APENVRQIGE (221 aa)) is thioesterase.

The protein belongs to the NRP synthetase family. Pantetheine 4'-phosphate serves as cofactor.

It carries out the reaction holo-[peptidyl-carrier protein] + L-arginine + ATP = L-arginyl-[peptidyl-carrier protein] + AMP + diphosphate. It catalyses the reaction holo-[peptidyl-carrier protein] + L-serine + ATP = L-seryl-[peptidyl-carrier protein] + AMP + diphosphate. It functions in the pathway siderophore biosynthesis. In terms of biological role, involved in the synthesis of the siderophore vanchrobactin. Probably adenylates L-arginine via its first adenylation domain and loads it onto its first peptidyl carrier domain via a thioester linkage to the phosphopanthetheine moiety. In addition, may adenylate L-serine via its second adenylation domain and loads it onto its second peptidyl carrier domain via a thioester linkage to the phosphopanthetheine moiety. The thioesterase domain may release vanchrobactin after condensation of the siderophore components. In Vibrio anguillarum (Listonella anguillarum), this protein is Vanchrobactin synthetase VabF.